We begin with the raw amino-acid sequence, 45 residues long: Large ribosomal subunit protein bL34 (45 aa).

Basic residues-rich tracts occupy residues 1 to 15 (MKAK…RKRA) and 22 to 45 (MKTK…IAIK). The interval 1–45 (MKAKSHLSNKKRKRASGFLARMKTKAGRKILARRRAKGRKRIAIK) is disordered.

This sequence belongs to the bacterial ribosomal protein bL34 family.

This chain is Large ribosomal subunit protein bL34, found in Sulfurihydrogenibium sp. (strain YO3AOP1).